The sequence spans 279 residues: Succinate dehydrogenase [ubiquinone] iron-sulfur subunit 1, mitochondrial (279 aa).

The N-terminal 28 residues, 1–28, are a transit peptide targeting the mitochondrion; it reads MASGLIGRLVGTKPSKLATAARLIPARW. A 2Fe-2S ferredoxin-type domain is found at 52–141; that stretch reads FQIYRWNPDN…ETTITPLPHM (90 aa). Cys-102, Cys-107, and Cys-122 together coordinate [2Fe-2S] cluster. One can recognise a 4Fe-4S ferredoxin-type domain in the interval 184-214; the sequence is DRAKLDGMYECILCACCSTSCPSYWWNPESY. [4Fe-4S] cluster contacts are provided by Cys-194, Cys-197, and Cys-200. Residue Cys-204 coordinates [3Fe-4S] cluster. An a ubiquinone-binding site is contributed by Trp-209. 2 residues coordinate [3Fe-4S] cluster: Cys-251 and Cys-257. A [4Fe-4S] cluster-binding site is contributed by Cys-261.

The protein belongs to the succinate dehydrogenase/fumarate reductase iron-sulfur protein family. Component of complex II composed of eight subunits in plants: four classical SDH subunits SDH1, SDH2, SDH3 and SDH4 (a flavoprotein (FP), an iron-sulfur protein (IP), and a cytochrome b composed of a large and a small subunit.), as well as four subunits unknown in mitochondria from bacteria and heterotrophic eukaryotes. The cofactor is [2Fe-2S] cluster. [3Fe-4S] cluster serves as cofactor. [4Fe-4S] cluster is required as a cofactor. As to expression, ubiquitous. Preferentially expressed in flowers and inflorescences.

It localises to the mitochondrion inner membrane. The catalysed reaction is a quinone + succinate = fumarate + a quinol. Its pathway is carbohydrate metabolism; tricarboxylic acid cycle; fumarate from succinate (eukaryal route): step 1/1. In terms of biological role, iron-sulfur protein (IP) subunit of succinate dehydrogenase (SDH) that is involved in complex II of the mitochondrial electron transport chain and is responsible for transferring electrons from succinate to ubiquinone (coenzyme Q). This chain is Succinate dehydrogenase [ubiquinone] iron-sulfur subunit 1, mitochondrial (SDH2-1), found in Arabidopsis thaliana (Mouse-ear cress).